The primary structure comprises 175 residues: Translation initiation factor IF-3 (175 aa).

It belongs to the IF-3 family. Monomer.

It localises to the cytoplasm. In terms of biological role, IF-3 binds to the 30S ribosomal subunit and shifts the equilibrium between 70S ribosomes and their 50S and 30S subunits in favor of the free subunits, thus enhancing the availability of 30S subunits on which protein synthesis initiation begins. The protein is Translation initiation factor IF-3 of Staphylococcus aureus (strain MRSA252).